The chain runs to 484 residues: 1,3-beta-glucanosyltransferase GAS5 (484 aa).

The N-terminal stretch at 1-19 (MLLRSLTSAFVLSAGLAQA) is a signal peptide. N-linked (GlcNAc...) asparagine glycans are attached at residues Asn24 and Asn60. A disulfide bridge connects residues Cys71 and Cys100. The (1,3-beta-D-glucosyl)n site is built by Tyr89, Asn159, and Glu160. The active-site Proton donor is the Glu160. A glycan (N-linked (GlcNAc...) asparagine) is linked at Asn166. (1,3-beta-D-glucosyl)n is bound by residues Asp201 and Arg206. Cystine bridges form between Cys215-Cys348 and Cys234-Cys265. Residue Glu262 is the Nucleophile of the active site. Residue Tyr295 coordinates (1,3-beta-D-glucosyl)n. Residues Asn299, Asn344, and Asn359 are each glycosylated (N-linked (GlcNAc...) asparagine). Residues 383 to 462 (TGIATQQSCD…SSQSSSKSKG (80 aa)) form a disordered region. Over residues 394-404 (KDDDDEEDDDT) the composition is skewed to acidic residues. Low complexity predominate over residues 405–462 (SSSSSSSSSSSSSASSSSESSSSTSKASSSSPSASETSLLKSAASATSSSQSSSKSKG). Gly462 carries GPI-anchor amidated glycine lipidation. Positions 463–484 (AAGIIEIPLIFRALAELYNLVL) are cleaved as a propeptide — removed in mature form.

It belongs to the glycosyl hydrolase 72 family. The GPI-anchor is attached to the protein in the endoplasmic reticulum and serves to target the protein to the cell surface. There, the glucosamine-inositol phospholipid moiety is cleaved off and the GPI-modified mannoprotein is covalently attached via its lipidless GPI glycan remnant to the 1,6-beta-glucan of the outer cell wall layer.

The protein resides in the secreted. It localises to the cell wall. It is found in the membrane. Its function is as follows. Splits internally a 1,3-beta-glucan molecule and transfers the newly generated reducing end (the donor) to the non-reducing end of another 1,3-beta-glucan molecule (the acceptor) forming a 1,3-beta linkage, resulting in the elongation of 1,3-beta-glucan chains in the cell wall. Involved in cell wall biosynthesis and morphogenesis. This chain is 1,3-beta-glucanosyltransferase GAS5 (GAS5), found in Saccharomyces cerevisiae (strain ATCC 204508 / S288c) (Baker's yeast).